The chain runs to 274 residues: tRNA-cytidine(32) 2-sulfurtransferase (274 aa).

A PP-loop motif motif is present at residues 40-45 (SGGKDS). Cys115, Cys118, and Cys206 together coordinate [4Fe-4S] cluster.

Belongs to the TtcA family. In terms of assembly, homodimer. Mg(2+) is required as a cofactor. It depends on [4Fe-4S] cluster as a cofactor.

It is found in the cytoplasm. The catalysed reaction is cytidine(32) in tRNA + S-sulfanyl-L-cysteinyl-[cysteine desulfurase] + AH2 + ATP = 2-thiocytidine(32) in tRNA + L-cysteinyl-[cysteine desulfurase] + A + AMP + diphosphate + H(+). Its pathway is tRNA modification. Functionally, catalyzes the ATP-dependent 2-thiolation of cytidine in position 32 of tRNA, to form 2-thiocytidine (s(2)C32). The sulfur atoms are provided by the cysteine/cysteine desulfurase (IscS) system. In Pseudomonas entomophila (strain L48), this protein is tRNA-cytidine(32) 2-sulfurtransferase.